A 149-amino-acid chain; its full sequence is Transcriptional repressor NrdR (149 aa).

Residues 3–34 fold into a zinc finger; it reads CPFCSATDTKVIDSRLVSDGHQVRRRRQCLAC. One can recognise an ATP-cone domain in the interval 49 to 139; the sequence is PKVIKSNGNR…VYRSFEDIKE (91 aa).

Belongs to the NrdR family. Zn(2+) serves as cofactor.

Its function is as follows. Negatively regulates transcription of bacterial ribonucleotide reductase nrd genes and operons by binding to NrdR-boxes. This is Transcriptional repressor NrdR from Aliivibrio fischeri (strain ATCC 700601 / ES114) (Vibrio fischeri).